The sequence spans 107 residues: Cytochrome c2 (107 aa).

The residue at position 1 (Q1) is a Pyrrolidone carboxylic acid. Heme c-binding residues include C13, C16, H17, and M79.

This sequence belongs to the cytochrome c family. In terms of processing, binds 1 heme c group covalently per subunit.

The protein localises to the periplasm. In terms of biological role, cytochrome c2 is found mainly in purple, non-sulfur, photosynthetic bacteria where it functions as the electron donor to the oxidized bacteriochlorophyll in the photophosphorylation pathway. However, it may also have a role in the respiratory chain and is found in some non-photosynthetic bacteria. The protein is Cytochrome c2 of Rhodoplanes tepidamans (Rhodoplanes cryptolactis).